We begin with the raw amino-acid sequence, 433 residues long: Peptidoglycan glycosyltransferase RodA (433 aa).

Helical transmembrane passes span 9-29 (FDYL…LFIY), 44-64 (YLKQ…VSMY), 74-94 (TLIF…GRYV), 100-120 (WIGV…AYIL), 158-178 (LGTA…AGFP), 181-201 (LIFA…LPLW), 221-241 (LSLF…VGYL), 249-269 (YWIT…LLGV), 295-315 (WHII…MGYL), 341-361 (WGFV…LHTL), 378-398 (GVLG…MGIM), and 400-420 (ITGI…TAMI).

The protein belongs to the SEDS family. MrdB/RodA subfamily.

The protein resides in the cell inner membrane. It catalyses the reaction [GlcNAc-(1-&gt;4)-Mur2Ac(oyl-L-Ala-gamma-D-Glu-L-Lys-D-Ala-D-Ala)](n)-di-trans,octa-cis-undecaprenyl diphosphate + beta-D-GlcNAc-(1-&gt;4)-Mur2Ac(oyl-L-Ala-gamma-D-Glu-L-Lys-D-Ala-D-Ala)-di-trans,octa-cis-undecaprenyl diphosphate = [GlcNAc-(1-&gt;4)-Mur2Ac(oyl-L-Ala-gamma-D-Glu-L-Lys-D-Ala-D-Ala)](n+1)-di-trans,octa-cis-undecaprenyl diphosphate + di-trans,octa-cis-undecaprenyl diphosphate + H(+). Its pathway is cell wall biogenesis; peptidoglycan biosynthesis. In terms of biological role, peptidoglycan polymerase that is essential for cell wall elongation. The protein is Peptidoglycan glycosyltransferase RodA of Treponema pallidum (strain Nichols).